The following is a 336-amino-acid chain: Abasic site processing protein HMCES (336 aa).

The active-site Nucleophile is Cys-2. Cys-2 is subject to Thiazolidine linkage to a ring-opened DNA abasic site. Residues Gln-29 to Tyr-38 show a composition bias toward basic and acidic residues. The segment at Gln-29–Val-52 is disordered. Glu-127 is an active-site residue. The tract at residues Leu-283–Ala-336 is disordered.

Belongs to the SOS response-associated peptidase family.

Its subcellular location is the chromosome. Its activity is regulated as follows. Formation and reversal of DNA-protein cross-link depends on DNA context. Catalyzes formation of the thiazolidine linkage in presence of abasic sites in single-stranded DNA. Mediates the reversal of the thiazolidine cross-link in presence of double stranded DNA. Functionally, sensor of abasic sites in single-stranded DNA (ssDNA) required to preserve genome integrity by promoting error-free repair of abasic sites. Acts as an enzyme that recognizes and binds abasic sites in ssDNA at replication forks and chemically modifies the lesion by forming a covalent cross-link with DNA: forms a stable thiazolidine linkage between a ring-opened abasic site and the alpha-amino and sulfhydryl substituents of its N-terminal catalytic cysteine residue. The HMCES DNA-protein cross-link is then either reversed or degraded. HMCES is able to catalyze the reversal of its thiazolidine cross-link and cycle between a cross-link and a non-cross-linked state depending on DNA context: mediates self-reversal of the thiazolidine cross-link in double stranded DNA, allowing APEX1 to initiate downstream repair of abasic sites. The HMCES DNA-protein cross-link can also be degraded by the SPRTN metalloprotease following unfolding by the BRIP1/FANCJ helicase. Promotes error-free repair of abasic sites by protecting abasic sites from translesion synthesis (TLS) polymerases and endonucleases that are error-prone and would generate mutations and double-strand breaks. Acts as a protease: mediates autocatalytic processing of its N-terminal methionine in order to expose the catalytic cysteine. The HMCES DNA-protein cross-link is then either reversed or degraded. According to a model, the HMCES DNA-protein cross-link. The polypeptide is Abasic site processing protein HMCES (Gallus gallus (Chicken)).